Here is a 272-residue protein sequence, read N- to C-terminus: Soluble interferon gamma receptor OPG193 (272 aa).

The N-terminal stretch at 1 to 13 is a signal peptide; it reads MRYIIILAVLFIN. Asn42, Asn150, and Asn267 each carry an N-linked (GlcNAc...) asparagine; by host glycan.

This sequence belongs to the type II cytokine receptor family. In terms of assembly, homodimer. Interacts with host IFNG.

It localises to the secreted. Functionally, counteracts the antiviral effects of host IFN-gamma. Acts as a soluble IFN-gamma receptor and thus inhibits the interaction between host IFN-gamma and its receptor. This Bos taurus (Bovine) protein is Soluble interferon gamma receptor OPG193 (OPG193).